The chain runs to 243 residues: Ubiquinone/menaquinone biosynthesis C-methyltransferase UbiE (243 aa).

S-adenosyl-L-methionine-binding positions include Thr-69, Asp-90, and 116-117 (DA).

Belongs to the class I-like SAM-binding methyltransferase superfamily. MenG/UbiE family.

The enzyme catalyses a 2-demethylmenaquinol + S-adenosyl-L-methionine = a menaquinol + S-adenosyl-L-homocysteine + H(+). It carries out the reaction a 2-methoxy-6-(all-trans-polyprenyl)benzene-1,4-diol + S-adenosyl-L-methionine = a 5-methoxy-2-methyl-3-(all-trans-polyprenyl)benzene-1,4-diol + S-adenosyl-L-homocysteine + H(+). The protein operates within quinol/quinone metabolism; menaquinone biosynthesis; menaquinol from 1,4-dihydroxy-2-naphthoate: step 2/2. It functions in the pathway cofactor biosynthesis; ubiquinone biosynthesis. In terms of biological role, methyltransferase required for the conversion of demethylmenaquinol (DMKH2) to menaquinol (MKH2) and the conversion of 2-polyprenyl-6-methoxy-1,4-benzoquinol (DDMQH2) to 2-polyprenyl-3-methyl-6-methoxy-1,4-benzoquinol (DMQH2). This chain is Ubiquinone/menaquinone biosynthesis C-methyltransferase UbiE, found in Paraburkholderia phytofirmans (strain DSM 17436 / LMG 22146 / PsJN) (Burkholderia phytofirmans).